The sequence spans 104 residues: Large ribosomal subunit protein uL23 (104 aa).

The protein belongs to the universal ribosomal protein uL23 family. Part of the 50S ribosomal subunit. Contacts protein L29, and trigger factor when it is bound to the ribosome.

In terms of biological role, one of the early assembly proteins it binds 23S rRNA. One of the proteins that surrounds the polypeptide exit tunnel on the outside of the ribosome. Forms the main docking site for trigger factor binding to the ribosome. The polypeptide is Large ribosomal subunit protein uL23 (Polynucleobacter asymbioticus (strain DSM 18221 / CIP 109841 / QLW-P1DMWA-1) (Polynucleobacter necessarius subsp. asymbioticus)).